The sequence spans 128 residues: Sulfurtransferase TusD (128 aa).

Cysteine 78 functions as the Cysteine persulfide intermediate in the catalytic mechanism.

Belongs to the DsrE/TusD family. In terms of assembly, heterohexamer, formed by a dimer of trimers. The hexameric TusBCD complex contains 2 copies each of TusB, TusC and TusD. The TusBCD complex interacts with TusE.

It is found in the cytoplasm. Part of a sulfur-relay system required for 2-thiolation of 5-methylaminomethyl-2-thiouridine (mnm(5)s(2)U) at tRNA wobble positions. Accepts sulfur from TusA and transfers it in turn to TusE. The protein is Sulfurtransferase TusD of Escherichia fergusonii (strain ATCC 35469 / DSM 13698 / CCUG 18766 / IAM 14443 / JCM 21226 / LMG 7866 / NBRC 102419 / NCTC 12128 / CDC 0568-73).